The following is a 418-amino-acid chain: Gamma-glutamyl phosphate reductase (418 aa).

This sequence belongs to the gamma-glutamyl phosphate reductase family.

It localises to the cytoplasm. The enzyme catalyses L-glutamate 5-semialdehyde + phosphate + NADP(+) = L-glutamyl 5-phosphate + NADPH + H(+). It functions in the pathway amino-acid biosynthesis; L-proline biosynthesis; L-glutamate 5-semialdehyde from L-glutamate: step 2/2. Its function is as follows. Catalyzes the NADPH-dependent reduction of L-glutamate 5-phosphate into L-glutamate 5-semialdehyde and phosphate. The product spontaneously undergoes cyclization to form 1-pyrroline-5-carboxylate. This chain is Gamma-glutamyl phosphate reductase, found in Geotalea daltonii (strain DSM 22248 / JCM 15807 / FRC-32) (Geobacter daltonii).